We begin with the raw amino-acid sequence, 427 residues long: Serine--tRNA ligase (427 aa).

231-233 (TAE) is a binding site for L-serine. 262-264 (RSE) is an ATP binding site. E285 provides a ligand contact to L-serine. 349–352 (EISS) lines the ATP pocket. S385 is an L-serine binding site.

This sequence belongs to the class-II aminoacyl-tRNA synthetase family. Type-1 seryl-tRNA synthetase subfamily. Homodimer. The tRNA molecule binds across the dimer.

It localises to the cytoplasm. It catalyses the reaction tRNA(Ser) + L-serine + ATP = L-seryl-tRNA(Ser) + AMP + diphosphate + H(+). The enzyme catalyses tRNA(Sec) + L-serine + ATP = L-seryl-tRNA(Sec) + AMP + diphosphate + H(+). The protein operates within aminoacyl-tRNA biosynthesis; selenocysteinyl-tRNA(Sec) biosynthesis; L-seryl-tRNA(Sec) from L-serine and tRNA(Sec): step 1/1. In terms of biological role, catalyzes the attachment of serine to tRNA(Ser). Is also able to aminoacylate tRNA(Sec) with serine, to form the misacylated tRNA L-seryl-tRNA(Sec), which will be further converted into selenocysteinyl-tRNA(Sec). The protein is Serine--tRNA ligase of Sinorhizobium fredii (strain NBRC 101917 / NGR234).